The following is a 395-amino-acid chain: MAKEQFDRSLPHVNIGTIGHVDHGKTTLTAAITKVLSEQGNAEFKDYANIDNAPEERERGITINTAHVEYKTANRHYAHVDCPGHADYVKNMITGAAQMDGAILVVAATDGPMPQTREHILLSRQVGVPKIVVFLNKCDMVEDDEMIDLVEMEIRDLLTEYDFDGEGAPVIRGSALGALNGDSKWTGAINELMAAVDEYIPTPQRDADKTFLMPVEDVFTITGRGTVATGRVERGTVKVNEEVEIIGLKEEPTKTVVTGLEMFRKLLDFAVAGDNVGALLRGVDRHSVERGQVLAKPGTIKPHTVLKASVYALTQEEGGRHKPFFNKYRPQFYFRTTDVTGEVTLPEGTDMVMPGDNVEMEIQLIKPVAVEEGTKFSIREGGRTIGAGTVISIEK.

The tr-type G domain maps to 10 to 204; sequence LPHVNIGTIG…AVDEYIPTPQ (195 aa). Positions 19 to 26 are G1; sequence GHVDHGKT. A GTP-binding site is contributed by 19–26; it reads GHVDHGKT. Residue T26 coordinates Mg(2+). Residues 60–64 are G2; that stretch reads GITIN. The segment at 81-84 is G3; sequence DCPG. Residues 81-85 and 136-139 each bind GTP; these read DCPGH and NKCD. A G4 region spans residues 136–139; sequence NKCD. A G5 region spans residues 174 to 176; that stretch reads SAL.

Belongs to the TRAFAC class translation factor GTPase superfamily. Classic translation factor GTPase family. EF-Tu/EF-1A subfamily. As to quaternary structure, monomer.

It localises to the cytoplasm. It catalyses the reaction GTP + H2O = GDP + phosphate + H(+). Its function is as follows. GTP hydrolase that promotes the GTP-dependent binding of aminoacyl-tRNA to the A-site of ribosomes during protein biosynthesis. This Mycoplasma capricolum subsp. capricolum (strain California kid / ATCC 27343 / NCTC 10154) protein is Elongation factor Tu.